The primary structure comprises 204 residues: Ras-related protein R-Ras2 (204 aa).

Ala2 carries the post-translational modification N-acetylalanine. 21–29 provides a ligand contact to GTP; that stretch reads GGGGVGKSA. The short motif at 43–51 is the Effector region element; sequence YDPTIEDSY. GTP-binding positions include 68–72, 127–130, and 157–159; these read DTAGQ, NKAD, and SAK. Position 186 is a phosphoserine (Ser186). N6-palmitoyl lysine attachment occurs at residues Lys192, Lys194, Lys196, and Lys197. Residue Cys199 is the site of S-palmitoyl cysteine attachment. The residue at position 201 (Cys201) is a Cysteine methyl ester. Cys201 carries the S-farnesyl cysteine lipid modification. A propeptide spans 202–204 (removed in mature form); that stretch reads VIF.

Belongs to the small GTPase superfamily. Ras family. In terms of assembly, interacts with RASSF5. Post-translationally, may be post-translationally modified by both palmitoylation and polyisoprenylation. In terms of processing, fatty-acylation at Lys-192, Lys-194; lys-196 and Lys-197 is required for localization to the plasma membrane and activity. Defatty-acylated by SIRT6, affecting its localization to the plasma membrane. As to expression, ubiquitously present in all tissues examined, with the highest levels in heart, placenta, and skeletal muscle. Moderate levels in lung and liver; low levels in brain, kidney, and pancreas.

It is found in the cell membrane. Its subcellular location is the golgi apparatus membrane. It carries out the reaction GTP + H2O = GDP + phosphate + H(+). GTP-binding protein with GTPase activity, involved in the regulation of MAPK signaling pathway and thereby controlling multiple cellular processes. Regulates craniofacial development. In Homo sapiens (Human), this protein is Ras-related protein R-Ras2.